Consider the following 555-residue polypeptide: Spermine oxidase (555 aa).

FAD contacts are provided by residues alanine 35, glutamate 55, arginine 63, 79-80 (TW), and valine 261. The tract at residues 271–307 (AHPRGPEIEPRGEGDHNHDTGEGGQSGENPQQGRWDE) is disordered. Positions 274–291 (RGPEIEPRGEGDHNHDTG) are enriched in basic and acidic residues. Residues glutamate 519 and 528–529 (TT) contribute to the FAD site.

It belongs to the flavin monoamine oxidase family. It depends on FAD as a cofactor. In terms of tissue distribution, widely expressed. Isoform 1 and isoform 2 are expressed at higher level in brain and skeletal muscle. Isoform 7 is found in brain and spleen, isoform 10 is widely expressed but found at lower level in heart, kidney, liver and lung.

The protein resides in the cytoplasm. It is found in the nucleus. The catalysed reaction is spermine + O2 + H2O = 3-aminopropanal + spermidine + H2O2. It participates in amine and polyamine degradation; spermine degradation. In terms of biological role, flavoenzyme which catalyzes the oxidation of spermine to spermidine. Can also use N(1)-acetylspermine and spermidine as substrates, with different affinity depending on the isoform (isozyme) and on the experimental conditions. Plays an important role in the regulation of polyamine intracellular concentration and has the potential to act as a determinant of cellular sensitivity to the antitumor polyamine analogs. May contribute to beta-alanine production via aldehyde dehydrogenase conversion of 3-amino-propanal. The protein is Spermine oxidase (Smox) of Mus musculus (Mouse).